Reading from the N-terminus, the 222-residue chain is Putative germin-like protein 3-2 (222 aa).

Residues 1-22 (MAKLILATFAVVFLALAATSLA) form the signal peptide. Cys-32 and Cys-50 are joined by a disulfide. 2 N-linked (GlcNAc...) asparagine glycosylation sites follow: Asn-55 and Asn-71. Residues 64–212 (DGLTNAGNTT…AFQVDGGMVE (149 aa)) enclose the Cupin type-1 domain. Mn(2+)-binding residues include His-112, His-114, Glu-119, and His-158. Asn-165 carries N-linked (GlcNAc...) asparagine glycosylation.

This sequence belongs to the germin family. As to quaternary structure, oligomer (believed to be a pentamer but probably hexamer).

The protein localises to the secreted. It localises to the extracellular space. The protein resides in the apoplast. In terms of biological role, may play a role in plant defense. Probably has no oxalate oxidase activity even if the active site is conserved. The sequence is that of Putative germin-like protein 3-2 from Oryza sativa subsp. japonica (Rice).